The sequence spans 91 residues: Cytochrome c-554(547) (91 aa).

Heme c-binding residues include Cys15, Cys18, His19, and Met64.

Monomer. In terms of processing, binds 1 heme c group covalently per subunit.

This is Cytochrome c-554(547) from Halothiobacillus neapolitanus (Thiobacillus neapolitanus).